We begin with the raw amino-acid sequence, 318 residues long: Deoxyribose-phosphate aldolase (318 aa).

The Proton donor/acceptor role is filled by Asp-155. Lys-218 functions as the Schiff-base intermediate with acetaldehyde in the catalytic mechanism. The active-site Proton donor/acceptor is Lys-254.

The protein belongs to the DeoC/FbaB aldolase family. DeoC type 2 subfamily. As to quaternary structure, interacts with YBX1. Mainly expressed in liver, lung and colon.

The protein resides in the cytoplasm. It localises to the cytoplasmic granule. The protein localises to the nucleus. It catalyses the reaction 2-deoxy-D-ribose 5-phosphate = D-glyceraldehyde 3-phosphate + acetaldehyde. It functions in the pathway carbohydrate degradation; 2-deoxy-D-ribose 1-phosphate degradation; D-glyceraldehyde 3-phosphate and acetaldehyde from 2-deoxy-alpha-D-ribose 1-phosphate: step 2/2. Functionally, catalyzes a reversible aldol reaction between acetaldehyde and D-glyceraldehyde 3-phosphate to generate 2-deoxy-D-ribose 5-phosphate. Participates in stress granule (SG) assembly. May allow ATP production from extracellular deoxyinosine in conditions of energy deprivation. This chain is Deoxyribose-phosphate aldolase (DERA), found in Homo sapiens (Human).